Here is a 151-residue protein sequence, read N- to C-terminus: D-ribose pyranase 1 (151 aa).

H20 (proton donor) is an active-site residue. Substrate-binding positions include D28, H98, and 121-123 (WGN).

The protein belongs to the RbsD / FucU family. RbsD subfamily. As to quaternary structure, homodecamer.

The protein resides in the cytoplasm. It catalyses the reaction beta-D-ribopyranose = beta-D-ribofuranose. The protein operates within carbohydrate metabolism; D-ribose degradation; D-ribose 5-phosphate from beta-D-ribopyranose: step 1/2. Functionally, catalyzes the interconversion of beta-pyran and beta-furan forms of D-ribose. The polypeptide is D-ribose pyranase 1 (Streptomyces griseus subsp. griseus (strain JCM 4626 / CBS 651.72 / NBRC 13350 / KCC S-0626 / ISP 5235)).